A 299-amino-acid chain; its full sequence is Protein N-terminal and lysine N-methyltransferase EFM7 (299 aa).

S-adenosyl-L-methionine-binding positions include Trp-74, Gly-100–Gly-102, Asp-122, Trp-155, and Ser-178.

Belongs to the class I-like SAM-binding methyltransferase superfamily. EFM7 family.

The protein localises to the cytoplasm. In terms of biological role, S-adenosyl-L-methionine-dependent protein methyltransferase that trimethylates the N-terminal glycine 'Gly-2' of elongation factor 1-alpha, before also catalyzing the mono- and dimethylation of 'Lys-3'. This Cryptococcus neoformans var. neoformans serotype D (strain B-3501A) (Filobasidiella neoformans) protein is Protein N-terminal and lysine N-methyltransferase EFM7.